The sequence spans 553 residues: Fusion glycoprotein F0 (553 aa).

The signal sequence occupies residues 1–31 (MGSRPFTKNPAPMMLTIRVALVLSCICPANS). Residues 31-500 (SIDGRPFAAA…VNVKLTSTSA (470 aa)) are Extracellular-facing. 5 disulfides stabilise this stretch: C76-C199, C338-C347, C362-C370, C394-C399, and C401-C424. 2 N-linked (GlcNAc...) asparagine; by host glycosylation sites follow: N85 and N191. The N-linked (GlcNAc...) asparagine; by host glycan is linked to N366. 2 N-linked (GlcNAc...) asparagine; by host glycosylation sites follow: N447 and N471. Residues 463-499 (ISTELGNVNNSISNALNKLEESNRKLDKVNVKLTSTS) are a coiled coil. Residues 501–521 (LITYIVLTIISLVFGILSLIL) traverse the membrane as a helical segment. Residues 522-553 (ACYLMYKQKAQQKTLLWLGNNTLDQMRATTKM) are Cytoplasmic-facing. The S-palmitoyl cysteine; by host moiety is linked to residue C523.

Belongs to the paramyxoviruses fusion glycoprotein family. In terms of assembly, homotrimer of disulfide-linked F1-F2. Post-translationally, the inactive precursor F0 is glycosylated and proteolytically cleaved into F1 and F2 to be functionally active. The cleavage is mediated by cellular proteases during the transport and maturation of the polypeptide.

The protein localises to the virion membrane. It is found in the host cell membrane. Its function is as follows. Class I viral fusion protein. Under the current model, the protein has at least 3 conformational states: pre-fusion native state, pre-hairpin intermediate state, and post-fusion hairpin state. During viral and plasma cell membrane fusion, the heptad repeat (HR) regions assume a trimer-of-hairpins structure, positioning the fusion peptide in close proximity to the C-terminal region of the ectodomain. The formation of this structure appears to drive apposition and subsequent fusion of viral and plasma cell membranes. Directs fusion of viral and cellular membranes leading to delivery of the nucleocapsid into the cytoplasm. This fusion is pH independent and occurs directly at the outer cell membrane. The trimer of F1-F2 (F protein) probably interacts with HN at the virion surface. Upon HN binding to its cellular receptor, the hydrophobic fusion peptide is unmasked and interacts with the cellular membrane, inducing the fusion between cell and virion membranes. Later in infection, F proteins expressed at the plasma membrane of infected cells could mediate fusion with adjacent cells to form syncytia, a cytopathic effect that could lead to tissue necrosis. This is Fusion glycoprotein F0 (F) from Gallus gallus (Chicken).